Here is a 229-residue protein sequence, read N- to C-terminus: Ribonuclease HII (229 aa).

Residues 34 to 223 (WPVAGADEAG…LRKTENGPET (190 aa)) enclose the RNase H type-2 domain. Aspartate 40, glutamate 41, and aspartate 131 together coordinate a divalent metal cation. Residues 209–229 (MSFRPLRKTENGPETDELLSE) are disordered.

The protein belongs to the RNase HII family. It depends on Mn(2+) as a cofactor. Mg(2+) is required as a cofactor.

The protein resides in the cytoplasm. The enzyme catalyses Endonucleolytic cleavage to 5'-phosphomonoester.. In terms of biological role, endonuclease that specifically degrades the RNA of RNA-DNA hybrids. The chain is Ribonuclease HII from Rhizobium johnstonii (strain DSM 114642 / LMG 32736 / 3841) (Rhizobium leguminosarum bv. viciae).